Reading from the N-terminus, the 367-residue chain is Phthiodiolone/phenolphthiodiolone dimycocerosates ketoreductase (367 aa).

Belongs to the mer family. Phthiodiolone/phenolphthiodiolone dimycocerosates ketoreductase subfamily.

Catalyzes the reduction of the keto moiety of phthiodiolone dimycocerosates (DIM B) and glycosylated phenolphthiodiolone dimycocerosates to form the intermediate compounds phthiotriol and glycosylated phenolphthiotriol dimycocerosates during phthiocerol dimycocerosates (DIM A) and glycosylated phenolphthiocerol dimycocerosates (PGL) biosynthesis. This Mycobacterium kansasii protein is Phthiodiolone/phenolphthiodiolone dimycocerosates ketoreductase.